A 191-amino-acid chain; its full sequence is dTTP/UTP pyrophosphatase (191 aa).

Catalysis depends on aspartate 71, which acts as the Proton acceptor.

Belongs to the Maf family. YhdE subfamily. It depends on a divalent metal cation as a cofactor.

The protein localises to the cytoplasm. The enzyme catalyses dTTP + H2O = dTMP + diphosphate + H(+). The catalysed reaction is UTP + H2O = UMP + diphosphate + H(+). Functionally, nucleoside triphosphate pyrophosphatase that hydrolyzes dTTP and UTP. May have a dual role in cell division arrest and in preventing the incorporation of modified nucleotides into cellular nucleic acids. This is dTTP/UTP pyrophosphatase from Hyphomonas neptunium (strain ATCC 15444).